The primary structure comprises 130 residues: Small ribosomal subunit protein uS9 (130 aa).

A disordered region spans residues 105–130; the sequence is TRDSRMKERKKPGLRGARRAPQFSKR. Residues 111–130 are compositionally biased toward basic residues; the sequence is KERKKPGLRGARRAPQFSKR.

It belongs to the universal ribosomal protein uS9 family.

The sequence is that of Small ribosomal subunit protein uS9 from Lysinibacillus sphaericus (strain C3-41).